Reading from the N-terminus, the 828-residue chain is G-type lectin S-receptor-like serine/threonine-protein kinase At2g19130 (828 aa).

Residues 1–22 (MVSFLTLTSFFFICFFIHGSSA) form the signal peptide. Residues 23-146 (VDTISGDFTL…GSSLSANVLW (124 aa)) enclose the Bulb-type lectin domain. Residues 23-439 (VDTISGDFTL…GASGKSNNKG (417 aa)) are Extracellular-facing. Asn85, Asn113, Asn203, Asn234, Asn240, and Asn255 each carry an N-linked (GlcNAc...) asparagine glycan. The region spanning 286–322 (PRQQCQVYRYCGSFGICSDKSEPFCRCPQGFRPMSQK) is the EGF-like domain. 4 disulfide bridges follow: Cys290–Cys302, Cys296–Cys310, Cys372–Cys394, and Cys376–Cys382. The region spanning 341-422 (CSRGDINQFF…EGNIFYLRLA (82 aa)) is the PAN domain. The chain crosses the membrane as a helical span at residues 440 to 460 (LIFGAVLGSLGVIVLVLLVVI). Residues 461–828 (LILRYRRRKR…KKMTNDNSSA (368 aa)) are Cytoplasmic-facing. The Protein kinase domain maps to 493 to 770 (KNFSDKLGGG…QVVQILEGVL (278 aa)). Residues 499-507 (LGGGGFGSV) and Lys521 contribute to the ATP site. Ser527 is subject to Phosphoserine. A caM-binding region spans residues 582–600 (VEEKIVLGWKLRFQIALGT). Asp619 acts as the Proton acceptor in catalysis. Phosphothreonine is present on Thr653. A disordered region spans residues 796-828 (ESSSSSSHNSSQNHKHSSSSSSSKKMTNDNSSA). Positions 797–828 (SSSSSSHNSSQNHKHSSSSSSSKKMTNDNSSA) are enriched in low complexity. Ser815 carries the phosphoserine modification.

Belongs to the protein kinase superfamily. Ser/Thr protein kinase family.

The protein resides in the cell membrane. It carries out the reaction L-seryl-[protein] + ATP = O-phospho-L-seryl-[protein] + ADP + H(+). The enzyme catalyses L-threonyl-[protein] + ATP = O-phospho-L-threonyl-[protein] + ADP + H(+). The protein is G-type lectin S-receptor-like serine/threonine-protein kinase At2g19130 of Arabidopsis thaliana (Mouse-ear cress).